The following is a 142-amino-acid chain: MRLIFIAKMLQYSFLPFSPFNLLNFDNSISVSWFITYSVIVSIWGFAVWIEGAYRNKINLQLPRCTKIKCSRYNTRIKSPKWFNCKNWMHFFLLYLFLTASNLIVQLAYFSKEMCSQGINVPGTKKPGNRVYLSVIILMGNG.

3 helical membrane passes run 3–23 (LIFI…FNLL), 30–50 (SVSW…AVWI), and 91–111 (FFLL…AYFS).

Its subcellular location is the membrane. This is an uncharacterized protein from Saccharomyces cerevisiae (strain ATCC 204508 / S288c) (Baker's yeast).